The primary structure comprises 235 residues: Alpha-S2-casein (235 aa).

The N-terminal stretch at 1-15 is a signal peptide; it reads MKFFIFTCLLAVAFA. 12 positions are modified to phosphoserine: Ser-23, Ser-24, Ser-25, Ser-28, Ser-47, Ser-72, Ser-73, Ser-74, Ser-77, Ser-147, Ser-149, and Ser-168. The segment covering 144–158 has biased composition (polar residues); that stretch reads EELSTSEEPVSSSQE. The segment at 144–163 is disordered; it reads EELSTSEEPVSSSQEENTKT.

It belongs to the alpha-casein family. As to expression, mammary gland specific. Secreted in milk.

Its subcellular location is the secreted. Its function is as follows. Important role in the capacity of milk to transport calcium phosphate. This Sus scrofa (Pig) protein is Alpha-S2-casein (CSN1S2).